The following is a 370-amino-acid chain: MAVKRDYYEVLGVQRNASQDEIKKAFRRLARQYHPDVNKAPDAEAKFKEINEAYEVLSDPEKRSMYDRFGHAGPTAAPGFDPFSSADPFSSIFETFFGGTMRGSQRGPQRGADLRYTLSISFEEAVFGVEKTIEFRRLETCPACRGSGAEPGTEPVRCPKCGGLGEIRQRAPLFNMVTVTTCDMCRGEGTVIAIPCRECRGEGRVRQTRKITVRVPPGVDNSSQIRISGEGDAGPRGGPYGNLYVVIDVQPHPYFIREGNDIILELPLNVAQAALGVEVEVPTIDGTEHLRIPPGVQSGAVFRIRGKGVPFLRSSGRGDQIVVVRVVIPTNLTDHQRRLFEELARSLEKEPIGGQRDEGFFGRIKNALGL.

A J domain is found at 6-70; the sequence is DYYEVLGVQR…EKRSMYDRFG (65 aa). Residues 128–208 form a CR-type zinc finger; the sequence is GVEKTIEFRR…CRGEGRVRQT (81 aa). Residues Cys-141, Cys-144, Cys-158, Cys-161, Cys-182, Cys-185, Cys-196, and Cys-199 each contribute to the Zn(2+) site. 4 CXXCXGXG motif repeats span residues 141–148, 158–165, 182–189, and 196–203; these read CPACRGSG, CPKCGGLG, CDMCRGEG, and CRECRGEG.

The protein belongs to the DnaJ family. As to quaternary structure, homodimer. The cofactor is Zn(2+).

Its subcellular location is the cytoplasm. Its function is as follows. Participates actively in the response to hyperosmotic and heat shock by preventing the aggregation of stress-denatured proteins and by disaggregating proteins, also in an autonomous, DnaK-independent fashion. Unfolded proteins bind initially to DnaJ; upon interaction with the DnaJ-bound protein, DnaK hydrolyzes its bound ATP, resulting in the formation of a stable complex. GrpE releases ADP from DnaK; ATP binding to DnaK triggers the release of the substrate protein, thus completing the reaction cycle. Several rounds of ATP-dependent interactions between DnaJ, DnaK and GrpE are required for fully efficient folding. Also involved, together with DnaK and GrpE, in the DNA replication of plasmids through activation of initiation proteins. The sequence is that of Chaperone protein DnaJ from Roseiflexus sp. (strain RS-1).